Consider the following 133-residue polypeptide: Small ribosomal subunit protein uS8 (133 aa).

It belongs to the universal ribosomal protein uS8 family. Part of the 30S ribosomal subunit. Contacts proteins S5 and S12.

One of the primary rRNA binding proteins, it binds directly to 16S rRNA central domain where it helps coordinate assembly of the platform of the 30S subunit. This chain is Small ribosomal subunit protein uS8, found in Thermosynechococcus vestitus (strain NIES-2133 / IAM M-273 / BP-1).